A 72-amino-acid chain; its full sequence is Translation initiation factor IF-1 (72 aa).

An S1-like domain is found at 1–72 (MAKEDSIEMQ…TKGRIVFRAR (72 aa)).

It belongs to the IF-1 family. Component of the 30S ribosomal translation pre-initiation complex which assembles on the 30S ribosome in the order IF-2 and IF-3, IF-1 and N-formylmethionyl-tRNA(fMet); mRNA recruitment can occur at any time during PIC assembly.

Its subcellular location is the cytoplasm. One of the essential components for the initiation of protein synthesis. Stabilizes the binding of IF-2 and IF-3 on the 30S subunit to which N-formylmethionyl-tRNA(fMet) subsequently binds. Helps modulate mRNA selection, yielding the 30S pre-initiation complex (PIC). Upon addition of the 50S ribosomal subunit IF-1, IF-2 and IF-3 are released leaving the mature 70S translation initiation complex. The chain is Translation initiation factor IF-1 from Shewanella amazonensis (strain ATCC BAA-1098 / SB2B).